The sequence spans 367 residues: E3 ubiquitin-protein ligase RGLG3 (367 aa).

Positions 37–257 (NLILGIDFTK…KEAAFALAAL (221 aa)) constitute a VWFA domain. The segment at 323-356 (CPICLTNPKDMAFSCGHTTCKECGVVITTCPLCR) adopts an RING-type zinc-finger fold.

As to quaternary structure, interacts with UBC30, GRXS17 and GLB3. Binds to and coactivates GAF1/IDD2 and ENY/IDD1. In terms of tissue distribution, widely expressed.

The protein resides in the cytoplasm. It localises to the nucleus. It catalyses the reaction S-ubiquitinyl-[E2 ubiquitin-conjugating enzyme]-L-cysteine + [acceptor protein]-L-lysine = [E2 ubiquitin-conjugating enzyme]-L-cysteine + N(6)-ubiquitinyl-[acceptor protein]-L-lysine.. Its function is as follows. Possesses E3 ubiquitin-protein ligase in vitro. Acts as upstream modulator of jasmonate (JA) signaling in response to various stimuli, such as JA-inhibited root growth, JA-inductive gene expression, coronatine-mediated pathogen susceptibility, wound-stimulated expression of JA-responsive genes and wound-induced JA biosynthesis. Controls fumonisin B1 (FB1)-triggered programmed cell death (PCD) by modulating the JA signaling pathway. May mediate salicylic acid (SA) suppression of JA signaling in FB1-induced responses. May mediate the formation of 'Lys-48'-linked multiubiquitin chains. Mediates the polyubiquitination and subsequent proteasomal degradation of the target protein GRXS17. The chain is E3 ubiquitin-protein ligase RGLG3 from Arabidopsis thaliana (Mouse-ear cress).